The primary structure comprises 167 residues: UPF0179 protein PAE0681 (167 aa).

Positions 142–167 (PSPSGSSISATSQGPSRAPPSRRLLK) are disordered. Residues 145 to 157 (SGSSISATSQGPS) show a composition bias toward low complexity.

It belongs to the UPF0179 family.

The chain is UPF0179 protein PAE0681 from Pyrobaculum aerophilum (strain ATCC 51768 / DSM 7523 / JCM 9630 / CIP 104966 / NBRC 100827 / IM2).